A 552-amino-acid chain; its full sequence is Chaperonin GroEL (552 aa).

ATP is bound by residues 30–33, Lys-51, 87–91, Gly-415, and Asp-496; these read TLGP and DGTTT.

This sequence belongs to the chaperonin (HSP60) family. Forms a cylinder of 14 subunits composed of two heptameric rings stacked back-to-back. Interacts with the co-chaperonin GroES.

The protein localises to the cytoplasm. The catalysed reaction is ATP + H2O + a folded polypeptide = ADP + phosphate + an unfolded polypeptide.. Functionally, together with its co-chaperonin GroES, plays an essential role in assisting protein folding. The GroEL-GroES system forms a nano-cage that allows encapsulation of the non-native substrate proteins and provides a physical environment optimized to promote and accelerate protein folding. This chain is Chaperonin GroEL, found in Paramagnetospirillum magneticum (strain ATCC 700264 / AMB-1) (Magnetospirillum magneticum).